We begin with the raw amino-acid sequence, 337 residues long: HTH-type transcriptional repressor PurR (337 aa).

The HTH lacI-type domain occupies 2-56; it reads ATIKDVAKLAAVSTTTVSHVINKTRFVAEATQKRVWEAVEELNYAPSAVARSLKC. Residues 4–23 constitute a DNA-binding region (H-T-H motif); the sequence is IKDVAKLAAVSTTTVSHVIN. The DNA-binding element occupies 48–56; the sequence is SAVARSLKC. Hypoxanthine contacts are provided by phenylalanine 73, lysine 189, threonine 191, phenylalanine 220, and aspartate 276.

Homodimer.

Its pathway is purine metabolism; purine nucleotide biosynthesis [regulation]. Its function is as follows. Is the main repressor of the genes involved in the de novo synthesis of purine nucleotides, regulating purB, purC, purEK, purF, purHD, purL, purMN and guaBA expression. PurR is allosterically activated to bind its cognate DNA by binding the purine corepressors, hypoxanthine or guanine, thereby effecting transcription repression. The polypeptide is HTH-type transcriptional repressor PurR (Aliivibrio fischeri (strain ATCC 700601 / ES114) (Vibrio fischeri)).